A 119-amino-acid chain; its full sequence is Immunoglobulin heavy variable 3-49 (119 aa).

Positions 1-19 are cleaved as a signal peptide; it reads MEFGLSWVFLVAILKGVQC. Positions 20–44 are framework-1; the sequence is EVQLVESGGGLVQPGRSLRLSCTAS. Positions 20 to 119 constitute an Ig-like domain; that stretch reads EVQLVESGGG…EDTAVYYCTR (100 aa). Cysteines 41 and 117 form a disulfide. The complementarity-determining-1 stretch occupies residues 45–52; sequence GFTFGDYA. The tract at residues 53–69 is framework-2; that stretch reads MSWVRQAPGKGLEWVGF. Positions 70 to 79 are complementarity-determining-2; it reads IRSKAYGGTT. The interval 80–117 is framework-3; it reads EYAASVKGRFTISRDDSKSIAYLQMNSLKTEDTAVYYC. Residues 118–119 are complementarity-determining-3; that stretch reads TR.

In terms of assembly, immunoglobulins are composed of two identical heavy chains and two identical light chains; disulfide-linked.

Its subcellular location is the secreted. It localises to the cell membrane. Functionally, v region of the variable domain of immunoglobulin heavy chains that participates in the antigen recognition. Immunoglobulins, also known as antibodies, are membrane-bound or secreted glycoproteins produced by B lymphocytes. In the recognition phase of humoral immunity, the membrane-bound immunoglobulins serve as receptors which, upon binding of a specific antigen, trigger the clonal expansion and differentiation of B lymphocytes into immunoglobulins-secreting plasma cells. Secreted immunoglobulins mediate the effector phase of humoral immunity, which results in the elimination of bound antigens. The antigen binding site is formed by the variable domain of one heavy chain, together with that of its associated light chain. Thus, each immunoglobulin has two antigen binding sites with remarkable affinity for a particular antigen. The variable domains are assembled by a process called V-(D)-J rearrangement and can then be subjected to somatic hypermutations which, after exposure to antigen and selection, allow affinity maturation for a particular antigen. The sequence is that of Immunoglobulin heavy variable 3-49 from Homo sapiens (Human).